The sequence spans 160 residues: 6,7-dimethyl-8-ribityllumazine synthase (160 aa).

5-amino-6-(D-ribitylamino)uracil contacts are provided by residues tryptophan 26, 58–60, and 80–82; these read AIE and VVI. 85-86 is a binding site for (2S)-2-hydroxy-3-oxobutyl phosphate; that stretch reads ET. Catalysis depends on histidine 88, which acts as the Proton donor. 5-amino-6-(D-ribitylamino)uracil is bound at residue asparagine 113. Arginine 127 is a binding site for (2S)-2-hydroxy-3-oxobutyl phosphate.

It belongs to the DMRL synthase family. In terms of assembly, homopentamer.

The catalysed reaction is (2S)-2-hydroxy-3-oxobutyl phosphate + 5-amino-6-(D-ribitylamino)uracil = 6,7-dimethyl-8-(1-D-ribityl)lumazine + phosphate + 2 H2O + H(+). It participates in cofactor biosynthesis; riboflavin biosynthesis; riboflavin from 2-hydroxy-3-oxobutyl phosphate and 5-amino-6-(D-ribitylamino)uracil: step 1/2. Functionally, catalyzes the formation of 6,7-dimethyl-8-ribityllumazine by condensation of 5-amino-6-(D-ribitylamino)uracil with 3,4-dihydroxy-2-butanone 4-phosphate. This is the penultimate step in the biosynthesis of riboflavin. The sequence is that of 6,7-dimethyl-8-ribityllumazine synthase from Mycobacteroides abscessus (strain ATCC 19977 / DSM 44196 / CCUG 20993 / CIP 104536 / JCM 13569 / NCTC 13031 / TMC 1543 / L948) (Mycobacterium abscessus).